A 228-amino-acid polypeptide reads, in one-letter code: Vacuolar-sorting protein snf7 (228 aa).

Coiled coils occupy residues 25–94 (ILGL…QINA) and 125–226 (EKVD…QAEM).

This sequence belongs to the SNF7 family. A component of the endosomal sorting required for transport complex III (ESCRT-III).

The protein resides in the cytoplasm. It localises to the endosome membrane. Its function is as follows. Required for the sorting and concentration of proteins resulting in the entry of these proteins into the invaginating vesicles of the multivesicular body (MVB). Also required for the proteolytic cleavage of the transcription factor pacc-1 in response to alkaline ambient pH. The chain is Vacuolar-sorting protein snf7 (vsp-3) from Neurospora crassa (strain ATCC 24698 / 74-OR23-1A / CBS 708.71 / DSM 1257 / FGSC 987).